Reading from the N-terminus, the 310-residue chain is MSENRIRIATRKSPLAMWQAEFVKAELERVHPGIVVELLPMSTKGDVILDTPLAKVGGKGLFVKELEVAMLEDQADIAVHSMKDVPVDFPEGLGLEVICEREDPRDAFVSNLYKSISELPLGATVGTSSLRRQCQLRASRPDLIIKDLRGNVGTRLAKLDNGEYDAIILAAAGLIRLKLSERIASFISAEESLPANGQGAVGIECRTNDERVKALLAPLEHLETRYRVIAERAMNTRLEGGCQVPIGAFAEIHGDEMTLRGLVGNPDGSEIIEGVITGPKTEATKLGVALAEELLSKGAKSILDAVYAKA.

C242 is modified (S-(dipyrrolylmethanemethyl)cysteine).

Belongs to the HMBS family. As to quaternary structure, monomer. Dipyrromethane is required as a cofactor.

The catalysed reaction is 4 porphobilinogen + H2O = hydroxymethylbilane + 4 NH4(+). It functions in the pathway porphyrin-containing compound metabolism; protoporphyrin-IX biosynthesis; coproporphyrinogen-III from 5-aminolevulinate: step 2/4. Tetrapolymerization of the monopyrrole PBG into the hydroxymethylbilane pre-uroporphyrinogen in several discrete steps. The chain is Porphobilinogen deaminase from Shewanella sp. (strain ANA-3).